Consider the following 365-residue polypeptide: Chorismate synthase (365 aa).

Arg48 and Arg54 together coordinate NADP(+). Residues 131-133 (RSS), 243-244 (NA), Gly288, 303-307 (KPTSS), and Arg329 contribute to the FMN site.

It belongs to the chorismate synthase family. Homotetramer. The cofactor is FMNH2.

The enzyme catalyses 5-O-(1-carboxyvinyl)-3-phosphoshikimate = chorismate + phosphate. It functions in the pathway metabolic intermediate biosynthesis; chorismate biosynthesis; chorismate from D-erythrose 4-phosphate and phosphoenolpyruvate: step 7/7. Its function is as follows. Catalyzes the anti-1,4-elimination of the C-3 phosphate and the C-6 proR hydrogen from 5-enolpyruvylshikimate-3-phosphate (EPSP) to yield chorismate, which is the branch point compound that serves as the starting substrate for the three terminal pathways of aromatic amino acid biosynthesis. This reaction introduces a second double bond into the aromatic ring system. The polypeptide is Chorismate synthase (Rhizobium etli (strain ATCC 51251 / DSM 11541 / JCM 21823 / NBRC 15573 / CFN 42)).